Consider the following 584-residue polypeptide: DNA mismatch repair protein MutL (584 aa).

The protein belongs to the DNA mismatch repair MutL/HexB family.

This protein is involved in the repair of mismatches in DNA. It is required for dam-dependent methyl-directed DNA mismatch repair. May act as a 'molecular matchmaker', a protein that promotes the formation of a stable complex between two or more DNA-binding proteins in an ATP-dependent manner without itself being part of a final effector complex. The protein is DNA mismatch repair protein MutL of Syntrophomonas wolfei subsp. wolfei (strain DSM 2245B / Goettingen).